The sequence spans 406 residues: Probable transcription factor FPSE_09188 (406 aa).

A disordered region spans residues 1-72 (MELPTYAVSQ…PKGSSSRCNG (72 aa)). A compositionally biased stretch (low complexity) spans 7-20 (AVSQSLLASRSVSS).

The protein belongs to the bZIP family.

It is found in the nucleus. In terms of biological role, the two putative transcription factors FPSE_09188 and FPSE_09189 could be responsible for orchestrating expression of the W493 A and B biosynthesis cluster genes. W493 A and B consist of six amino acid residues D-allo-thr, L-Ala, D-Ala, L-Gln, D-Tyr, and L-Val/L-Ile linked to a 3-hydroxy-4-methyltetradecanoic acid polyketide chain. The polypeptide is Probable transcription factor FPSE_09188 (Fusarium pseudograminearum (strain CS3096) (Wheat and barley crown-rot fungus)).